The sequence spans 270 residues: Tryptophan synthase alpha chain (270 aa).

Active-site proton acceptor residues include Glu49 and Asp60.

This sequence belongs to the TrpA family. As to quaternary structure, tetramer of two alpha and two beta chains.

It catalyses the reaction (1S,2R)-1-C-(indol-3-yl)glycerol 3-phosphate + L-serine = D-glyceraldehyde 3-phosphate + L-tryptophan + H2O. The protein operates within amino-acid biosynthesis; L-tryptophan biosynthesis; L-tryptophan from chorismate: step 5/5. Functionally, the alpha subunit is responsible for the aldol cleavage of indoleglycerol phosphate to indole and glyceraldehyde 3-phosphate. This is Tryptophan synthase alpha chain from Pseudomonas fluorescens (strain ATCC BAA-477 / NRRL B-23932 / Pf-5).